Consider the following 529-residue polypeptide: uncharacterized protein (529 aa).

The Nucleophile role is filled by Asp-389. The active site involves Glu-392. Residue Asp-459 is the Proton donor of the active site.

This sequence belongs to the glycosyl hydrolase 31 family.

This is an uncharacterized protein from Pseudescherichia vulneris (Escherichia vulneris).